Reading from the N-terminus, the 114-residue chain is Nucleoid-associated protein Tlet_0999 (114 aa).

It belongs to the YbaB/EbfC family. In terms of assembly, homodimer.

The protein localises to the cytoplasm. Its subcellular location is the nucleoid. Its function is as follows. Binds to DNA and alters its conformation. May be involved in regulation of gene expression, nucleoid organization and DNA protection. The chain is Nucleoid-associated protein Tlet_0999 from Pseudothermotoga lettingae (strain ATCC BAA-301 / DSM 14385 / NBRC 107922 / TMO) (Thermotoga lettingae).